Consider the following 127-residue polypeptide: Fatty acid-binding protein, liver (127 aa).

N-acetylmethionine is present on methionine 1. Serine 11 carries the post-translational modification Phosphoserine. An N6-succinyllysine mark is found at lysine 31 and lysine 36. At serine 39 the chain carries Phosphoserine. Lysine 46 is modified (N6-succinyllysine). Position 51 is a phosphothreonine (threonine 51). Serine 56 is subject to Phosphoserine. 3 positions are modified to N6-succinyllysine: lysine 57, lysine 78, and lysine 90. A Phosphoserine modification is found at serine 100. N6-succinyllysine is present on lysine 121.

The protein belongs to the calycin superfamily. Fatty-acid binding protein (FABP) family. Monomer.

Its subcellular location is the cytoplasm. Its function is as follows. Plays a role in lipoprotein-mediated cholesterol uptake in hepatocytes. Binds cholesterol. Binds free fatty acids and their coenzyme A derivatives, bilirubin, and some other small molecules in the cytoplasm. May be involved in intracellular lipid transport. In Sus scrofa (Pig), this protein is Fatty acid-binding protein, liver (FABP1).